The following is a 387-amino-acid chain: Proline-rich protein 5 (387 aa).

Interaction with RICTOR regions lie at residues 10-96 and 189-219; these read MSSP…LTKG and HESR…YGLY. The disordered stretch occupies residues 13-34; sequence PSLSDLGKREPGAAGTDERGTQ. Basic and acidic residues predominate over residues 18–33; the sequence is LGKREPGAAGTDERGT. At Ser253 the chain carries Phosphoserine. The segment at 262-387 is disordered; the sequence is NPVAEHEAEG…EAPGGRPSVV (126 aa). The span at 305 to 314 shows a compositional bias: polar residues; sequence SGTFRSSPTP. Residue Ser373 is modified to Phosphoserine.

Belongs to the PROTOR family. In terms of assembly, associated component of the mechanistic target of rapamycin complex 2 (mTORC2). Binds directly to MTOR and RICTOR within the TORC2 complex. Ubiquitously expressed. Expressed at high levels in kidney.

Associated subunit of mTORC2, which regulates cell growth and survival in response to hormonal signals. mTORC2 is activated by growth factors, but, in contrast to mTORC1, seems to be nutrient-insensitive. mTORC2 seems to function upstream of Rho GTPases to regulate the actin cytoskeleton, probably by activating one or more Rho-type guanine nucleotide exchange factors. PRR5 plays an important role in regulation of PDGFRB expression and in modulation of platelet-derived growth factor signaling. May act as a tumor suppressor in breast cancer. The sequence is that of Proline-rich protein 5 from Mus musculus (Mouse).